Here is an 878-residue protein sequence, read N- to C-terminus: Alanine--tRNA ligase (878 aa).

4 residues coordinate Zn(2+): His568, His572, Cys669, and His673.

The protein belongs to the class-II aminoacyl-tRNA synthetase family. Zn(2+) serves as cofactor.

It is found in the cytoplasm. It carries out the reaction tRNA(Ala) + L-alanine + ATP = L-alanyl-tRNA(Ala) + AMP + diphosphate. In terms of biological role, catalyzes the attachment of alanine to tRNA(Ala) in a two-step reaction: alanine is first activated by ATP to form Ala-AMP and then transferred to the acceptor end of tRNA(Ala). Also edits incorrectly charged Ser-tRNA(Ala) and Gly-tRNA(Ala) via its editing domain. This chain is Alanine--tRNA ligase, found in Polaromonas sp. (strain JS666 / ATCC BAA-500).